The chain runs to 166 residues: Glycine-rich RNA-binding protein GRP1A (166 aa).

Residues 8-86 (YRCFVGGLAW…RSITVNEAQS (79 aa)) form the RRM domain. The tract at residues 68 to 166 (GMNGQDLDGR…YGGSGGGGGW (99 aa)) is disordered. Composition is skewed to gly residues over residues 88-146 (GSGG…YGGG) and 153-166 (EGGGYGGSGGGGGW).

In terms of tissue distribution, predominantly expressed in meristematic and growing tissue.

It is found in the nucleus. In terms of biological role, may play a general role in circadian phenomena associated with meristematic tissue. In Sinapis alba (White mustard), this protein is Glycine-rich RNA-binding protein GRP1A.